Reading from the N-terminus, the 526-residue chain is Exodeoxyribonuclease 7 large subunit (526 aa).

The segment at 497–526 (AMTTEGGTPPAGAKKRSTKPAEPPKQGSLF) is disordered.

This sequence belongs to the XseA family. As to quaternary structure, heterooligomer composed of large and small subunits.

Its subcellular location is the cytoplasm. The catalysed reaction is Exonucleolytic cleavage in either 5'- to 3'- or 3'- to 5'-direction to yield nucleoside 5'-phosphates.. Its function is as follows. Bidirectionally degrades single-stranded DNA into large acid-insoluble oligonucleotides, which are then degraded further into small acid-soluble oligonucleotides. The sequence is that of Exodeoxyribonuclease 7 large subunit from Rhizobium johnstonii (strain DSM 114642 / LMG 32736 / 3841) (Rhizobium leguminosarum bv. viciae).